We begin with the raw amino-acid sequence, 338 residues long: MNLQKFSRYPLTFGPTPIQPLKRLSAHLGGKVELYAKRDDCNSGLAFGGNKTRKLEYLIPDALAQGCDTLVSIGGIQSNQTRQVAAVAAHLGMKCVLVQENWVNYHDAVYDRVGNIQMSRMMGADVRLVPDGFDIGFRKSWEDALADVRARGGKPYAIPAGCSDHPLGGLGFVGFAEEVRAQEAELGFQFDYVVVCSVTGSTQAGMVVGFAADGRADRVIGVDASAKPAQTREQILRIAKHTADRVELGRDITSADVVLDERFGGPEYGLPNEGTLEAIRLCAKLEGVLTDPVYEGKSMHGMIEKVRLGEFPAGSKVLYAHLGGVPALNAYSFLFRDG.

Lysine 51 is subject to N6-(pyridoxal phosphate)lysine. Residue serine 78 is the Nucleophile of the active site.

It belongs to the ACC deaminase/D-cysteine desulfhydrase family. As to quaternary structure, homotrimer. Requires pyridoxal 5'-phosphate as cofactor.

It catalyses the reaction 1-aminocyclopropane-1-carboxylate + H2O = 2-oxobutanoate + NH4(+). Its function is as follows. Catalyzes a cyclopropane ring-opening reaction, the irreversible conversion of 1-aminocyclopropane-1-carboxylate (ACC) to ammonia and alpha-ketobutyrate. Allows growth on ACC as a nitrogen source. This chain is 1-aminocyclopropane-1-carboxylate deaminase, found in Burkholderia pseudomallei (strain 1106a).